The following is a 365-amino-acid chain: Chorismate synthase (365 aa).

Residues R48 and R54 each coordinate NADP(+). FMN is bound by residues R131–S133, N243–A244, G288, K303–S307, and R329.

It belongs to the chorismate synthase family. Homotetramer. FMNH2 serves as cofactor.

It catalyses the reaction 5-O-(1-carboxyvinyl)-3-phosphoshikimate = chorismate + phosphate. The protein operates within metabolic intermediate biosynthesis; chorismate biosynthesis; chorismate from D-erythrose 4-phosphate and phosphoenolpyruvate: step 7/7. Functionally, catalyzes the anti-1,4-elimination of the C-3 phosphate and the C-6 proR hydrogen from 5-enolpyruvylshikimate-3-phosphate (EPSP) to yield chorismate, which is the branch point compound that serves as the starting substrate for the three terminal pathways of aromatic amino acid biosynthesis. This reaction introduces a second double bond into the aromatic ring system. This Rhizobium etli (strain CIAT 652) protein is Chorismate synthase.